The sequence spans 156 residues: ATP synthase subunit b (156 aa).

Residues 12–32 (LAFAIFVWFCMKLVWPPITAA) traverse the membrane as a helical segment.

The protein belongs to the ATPase B chain family. In terms of assembly, F-type ATPases have 2 components, F(1) - the catalytic core - and F(0) - the membrane proton channel. F(1) has five subunits: alpha(3), beta(3), gamma(1), delta(1), epsilon(1). F(0) has three main subunits: a(1), b(2) and c(10-14). The alpha and beta chains form an alternating ring which encloses part of the gamma chain. F(1) is attached to F(0) by a central stalk formed by the gamma and epsilon chains, while a peripheral stalk is formed by the delta and b chains.

The protein localises to the cell inner membrane. In terms of biological role, f(1)F(0) ATP synthase produces ATP from ADP in the presence of a proton or sodium gradient. F-type ATPases consist of two structural domains, F(1) containing the extramembraneous catalytic core and F(0) containing the membrane proton channel, linked together by a central stalk and a peripheral stalk. During catalysis, ATP synthesis in the catalytic domain of F(1) is coupled via a rotary mechanism of the central stalk subunits to proton translocation. Functionally, component of the F(0) channel, it forms part of the peripheral stalk, linking F(1) to F(0). The polypeptide is ATP synthase subunit b (Stutzerimonas stutzeri (strain A1501) (Pseudomonas stutzeri)).